Here is a 422-residue protein sequence, read N- to C-terminus: UDP-N-acetylglucosamine 1-carboxyvinyltransferase (422 aa).

22–23 (KN) provides a ligand contact to phosphoenolpyruvate. A UDP-N-acetyl-alpha-D-glucosamine-binding site is contributed by Arg92. Cys116 functions as the Proton donor in the catalytic mechanism. At Cys116 the chain carries 2-(S-cysteinyl)pyruvic acid O-phosphothioketal. Residues 121-125 (RPVDQ), Asp307, and Ile329 each bind UDP-N-acetyl-alpha-D-glucosamine.

Belongs to the EPSP synthase family. MurA subfamily.

The protein resides in the cytoplasm. The enzyme catalyses phosphoenolpyruvate + UDP-N-acetyl-alpha-D-glucosamine = UDP-N-acetyl-3-O-(1-carboxyvinyl)-alpha-D-glucosamine + phosphate. Its pathway is cell wall biogenesis; peptidoglycan biosynthesis. In terms of biological role, cell wall formation. Adds enolpyruvyl to UDP-N-acetylglucosamine. The polypeptide is UDP-N-acetylglucosamine 1-carboxyvinyltransferase (Psychrobacter arcticus (strain DSM 17307 / VKM B-2377 / 273-4)).